The following is a 540-amino-acid chain: Chaperonin GroEL 2/3 (540 aa).

Residues 30–33 (TLGP), K51, 87–91 (DGTTT), G415, 479–481 (NAA), and D495 contribute to the ATP site.

The protein belongs to the chaperonin (HSP60) family. As to quaternary structure, forms a cylinder of 14 subunits composed of two heptameric rings stacked back-to-back. Interacts with the co-chaperonin GroES.

It is found in the cytoplasm. It catalyses the reaction ATP + H2O + a folded polypeptide = ADP + phosphate + an unfolded polypeptide.. Functionally, together with its co-chaperonin GroES, plays an essential role in assisting protein folding. The GroEL-GroES system forms a nano-cage that allows encapsulation of the non-native substrate proteins and provides a physical environment optimized to promote and accelerate protein folding. The polypeptide is Chaperonin GroEL 2/3 (Paraburkholderia xenovorans (strain LB400)).